We begin with the raw amino-acid sequence, 544 residues long: Methionine--tRNA ligase (544 aa).

Residues proline 10–histidine 20 carry the 'HIGH' region motif. The Zn(2+) site is built by cysteine 141, cysteine 144, cysteine 153, and cysteine 156. The short motif at lysine 329–serine 333 is the 'KMSKS' region element. Position 332 (threonine 332) interacts with ATP.

It belongs to the class-I aminoacyl-tRNA synthetase family. MetG type 1 subfamily. As to quaternary structure, monomer. Zn(2+) serves as cofactor.

It localises to the cytoplasm. The enzyme catalyses tRNA(Met) + L-methionine + ATP = L-methionyl-tRNA(Met) + AMP + diphosphate. Is required not only for elongation of protein synthesis but also for the initiation of all mRNA translation through initiator tRNA(fMet) aminoacylation. This chain is Methionine--tRNA ligase, found in Bacillus mycoides (strain KBAB4) (Bacillus weihenstephanensis).